Here is a 748-residue protein sequence, read N- to C-terminus: Chondroadherin-like protein (748 aa).

Residues 1 to 29 (MERPQSSIWVFMLLLFMVLLQSPAWHVAA) form the signal peptide. Positions 30–61 (QRCPQTCVCDNSRRHVTCRHQNLTEVPNTIPE) constitute an LRRNT 1 domain. Asparagine 51 carries an N-linked (GlcNAc...) asparagine glycan. LRR repeat units follow at residues 85–107 (PHLT…AFRG), 108–131 (LGRL…ALDG), 132–155 (LGSL…TFGA), 156–179 (LGSL…AFQG), 181–203 (LRTR…ALAG), 204–227 (LPAL…ALSQ), 229–252 (RSLA…GLAL), 253–275 (PGLR…AFAH), and 276–299 (CPRL…QVPG). The 49-residue stretch at 309-357 (NPLWCACHARPLLEWLVRARVRSDGACRGPRRLRGEALDTLRPSDLRCP) folds into the LRRCT 1 domain. The segment at 352 to 389 (SDLRCPGDAAAGDGDGDEDEDRPAGPRAPPLRSPHGEA) is disordered. In terms of domain architecture, LRRNT 2 spans 394-428 (PCPPACACVAETRHSTCDGRGLQAVPRGFPNDTQL). Residues cysteine 395 and cysteine 410 are joined by a disulfide bond. LRR repeat units follow at residues 423 to 446 (PNDT…AFPG), 448 to 470 (RHLV…ALAG), 471 to 494 (LDRL…ALEG), 496 to 518 (PNLG…ALRA), 519 to 542 (LPTL…DLAG), 544 to 566 (RALR…ALGP), 567 to 590 (AREL…ALEG), 591 to 614 (LPAL…AFQP), 616 to 639 (GRSL…AFSG), and 641 to 665 (GKGL…GLSG). N-linked (GlcNAc...) asparagine glycosylation is present at asparagine 625. Residues 674-722 (NPFHCDCQLLPLHRWLTGLNLRVGATCATPPSVRGQKVKVAAPVFEACP) enclose the LRRCT 2 domain. Disulfide bonds link cysteine 678–cysteine 721 and cysteine 680–cysteine 700. The segment at 728–748 (KAKRTPTSRGSARRTPSLSRH) is disordered. The segment covering 734–748 (TSRGSARRTPSLSRH) has biased composition (polar residues).

Belongs to the small leucine-rich proteoglycan (SLRP) family. SLRP class IV subfamily. Associates with collagen and binds to collagen fibrils. In terms of tissue distribution, expressed in cartilage, including articular knee cartilage, where it localizes to the extracellular space in the area immediately surrounding the chondrocytes, not detected in any other tissues (at protein level).

It is found in the secreted. Its subcellular location is the extracellular space. The protein resides in the extracellular matrix. Functionally, potential negative modulator of chondrocyte differentiation. Inhibits collagen fibrillogenesis in vitro. May influence chondrocyte's differentiation by acting on its cellular collagenous microenvironment. In Mus musculus (Mouse), this protein is Chondroadherin-like protein (Chadl).